A 175-amino-acid polypeptide reads, in one-letter code: Adenine phosphoribosyltransferase (175 aa).

It belongs to the purine/pyrimidine phosphoribosyltransferase family. Homodimer.

Its subcellular location is the cytoplasm. It carries out the reaction AMP + diphosphate = 5-phospho-alpha-D-ribose 1-diphosphate + adenine. The protein operates within purine metabolism; AMP biosynthesis via salvage pathway; AMP from adenine: step 1/1. Its function is as follows. Catalyzes a salvage reaction resulting in the formation of AMP, that is energically less costly than de novo synthesis. The sequence is that of Adenine phosphoribosyltransferase from Oenococcus oeni (strain ATCC BAA-331 / PSU-1).